Consider the following 215-residue polypeptide: Probable phosphoglycerate mutase GpmB (215 aa).

Residues 8–15 (RHGESEWN), 21–22 (QG), R58, R60, 82–85 (ELHM), and 151–152 (GI) contribute to the substrate site. The Tele-phosphohistidine intermediate role is filled by H9. E82 acts as the Proton donor/acceptor in catalysis.

It belongs to the phosphoglycerate mutase family. GpmB subfamily.

It catalyses the reaction (2R)-2-phosphoglycerate = (2R)-3-phosphoglycerate. The protein operates within carbohydrate degradation; glycolysis; pyruvate from D-glyceraldehyde 3-phosphate: step 3/5. In Photorhabdus laumondii subsp. laumondii (strain DSM 15139 / CIP 105565 / TT01) (Photorhabdus luminescens subsp. laumondii), this protein is Probable phosphoglycerate mutase GpmB.